The chain runs to 429 residues: Ribosomal protein uS12 methylthiotransferase RimO (429 aa).

Residues 2–118 (HNIFLLSLGC…VLRAIGAEYR (117 aa)) enclose the MTTase N-terminal domain. The [4Fe-4S] cluster site is built by Cys-11, Cys-47, Cys-81, Cys-142, Cys-146, and Cys-149. In terms of domain architecture, Radical SAM core spans 128–357 (LTPPHYAFLK…MELQETISQE (230 aa)). Residues 360–427 (REFEGNEIVV…PYDLEGEVIG (68 aa)) form the TRAM domain.

It belongs to the methylthiotransferase family. RimO subfamily. [4Fe-4S] cluster is required as a cofactor.

Its subcellular location is the cytoplasm. The enzyme catalyses L-aspartate(89)-[ribosomal protein uS12]-hydrogen + (sulfur carrier)-SH + AH2 + 2 S-adenosyl-L-methionine = 3-methylsulfanyl-L-aspartate(89)-[ribosomal protein uS12]-hydrogen + (sulfur carrier)-H + 5'-deoxyadenosine + L-methionine + A + S-adenosyl-L-homocysteine + 2 H(+). In terms of biological role, catalyzes the methylthiolation of an aspartic acid residue of ribosomal protein uS12. The protein is Ribosomal protein uS12 methylthiotransferase RimO of Chlorobium limicola (strain DSM 245 / NBRC 103803 / 6330).